The sequence spans 137 residues: ATP synthase epsilon chain (137 aa).

It belongs to the ATPase epsilon chain family. As to quaternary structure, F-type ATPases have 2 components, CF(1) - the catalytic core - and CF(0) - the membrane proton channel. CF(1) has five subunits: alpha(3), beta(3), gamma(1), delta(1), epsilon(1). CF(0) has three main subunits: a, b and c.

It is found in the cell membrane. Produces ATP from ADP in the presence of a proton gradient across the membrane. The protein is ATP synthase epsilon chain of Caldicellulosiruptor bescii (strain ATCC BAA-1888 / DSM 6725 / KCTC 15123 / Z-1320) (Anaerocellum thermophilum).